The chain runs to 204 residues: Cysteine-rich protein 3 (204 aa).

Residues 3-64 enclose the LIM zinc-binding 1 domain; the sequence is WTCPRCQQPV…KPCYGALFGP (62 aa). The interval 88–107 is disordered; the sequence is ISLSPSNFSPPRPRTGLSRA. In terms of domain architecture, LIM zinc-binding 2 spans 122–183; sequence SLCPGCGDPV…IPCYGYLFGP (62 aa).

In terms of tissue distribution, expressed specifically by the thymus.

The protein resides in the cytoplasm. The polypeptide is Cysteine-rich protein 3 (Crip3) (Mus musculus (Mouse)).